We begin with the raw amino-acid sequence, 369 residues long: Molybdenum import ATP-binding protein ModC (369 aa).

One can recognise an ABC transporter domain in the interval 7–243 (PGQAGIHARF…LDLPMAMTDD (237 aa)). Residue 41-48 (GQSGSGKT) coordinates ATP. Positions 304 to 369 (EGSILNVLAV…AQIKAVSLLA (66 aa)) constitute a Mop domain.

This sequence belongs to the ABC transporter superfamily. Molybdate importer (TC 3.A.1.8) family. As to quaternary structure, the complex is composed of two ATP-binding proteins (ModC), two transmembrane proteins (ModB) and a solute-binding protein (ModA).

The protein localises to the cell inner membrane. The enzyme catalyses molybdate(out) + ATP + H2O = molybdate(in) + ADP + phosphate + H(+). Functionally, part of the ABC transporter complex ModABC involved in molybdenum import. Responsible for energy coupling to the transport system. The sequence is that of Molybdenum import ATP-binding protein ModC from Bordetella bronchiseptica (strain ATCC BAA-588 / NCTC 13252 / RB50) (Alcaligenes bronchisepticus).